The following is a 445-amino-acid chain: Ribosomal protein uS12 methylthiotransferase RimO (445 aa).

Residues 4–119 (YKVGMVSLGC…INEAIMNFIN (116 aa)) form the MTTase N-terminal domain. [4Fe-4S] cluster is bound by residues Cys-13, Cys-48, Cys-82, Cys-157, Cys-161, and Cys-164. Residues 143-373 (TTDKATAYLR…MLLQKEVSEE (231 aa)) enclose the Radical SAM core domain. One can recognise a TRAM domain in the interval 376–441 (KNKVGREYDV…EYDLVGVVCN (66 aa)).

It belongs to the methylthiotransferase family. RimO subfamily. [4Fe-4S] cluster serves as cofactor.

It localises to the cytoplasm. It carries out the reaction L-aspartate(89)-[ribosomal protein uS12]-hydrogen + (sulfur carrier)-SH + AH2 + 2 S-adenosyl-L-methionine = 3-methylsulfanyl-L-aspartate(89)-[ribosomal protein uS12]-hydrogen + (sulfur carrier)-H + 5'-deoxyadenosine + L-methionine + A + S-adenosyl-L-homocysteine + 2 H(+). In terms of biological role, catalyzes the methylthiolation of an aspartic acid residue of ribosomal protein uS12. In Clostridium perfringens (strain 13 / Type A), this protein is Ribosomal protein uS12 methylthiotransferase RimO.